Reading from the N-terminus, the 363-residue chain is 3-isopropylmalate dehydrogenase (363 aa).

Residue 78-91 (GKRWDHLPINERPE) coordinates NAD(+). Substrate contacts are provided by arginine 99, arginine 109, arginine 138, and aspartate 227. Residues aspartate 227, aspartate 251, and aspartate 255 each coordinate Mg(2+). 285-297 (GSAPDIAGKNTAN) provides a ligand contact to NAD(+).

The protein belongs to the isocitrate and isopropylmalate dehydrogenases family. LeuB type 1 subfamily. As to quaternary structure, homodimer. It depends on Mg(2+) as a cofactor. Requires Mn(2+) as cofactor.

Its subcellular location is the cytoplasm. The catalysed reaction is (2R,3S)-3-isopropylmalate + NAD(+) = 4-methyl-2-oxopentanoate + CO2 + NADH. The protein operates within amino-acid biosynthesis; L-leucine biosynthesis; L-leucine from 3-methyl-2-oxobutanoate: step 3/4. Functionally, catalyzes the oxidation of 3-carboxy-2-hydroxy-4-methylpentanoate (3-isopropylmalate) to 3-carboxy-4-methyl-2-oxopentanoate. The product decarboxylates to 4-methyl-2 oxopentanoate. The chain is 3-isopropylmalate dehydrogenase from Buchnera aphidicola subsp. Uroleucon helianthicola.